The following is a 150-amino-acid chain: PTTG1IP family member 2 (150 aa).

A signal peptide spans 1 to 19 (MCWLRAWSHILLPVFLSVA). Topologically, residues 20-98 (LIQLIFNLSD…SIFWANCNVD (79 aa)) are extracellular. N26 carries N-linked (GlcNAc...) asparagine glycosylation. The chain crosses the membrane as a helical span at residues 99-119 (LFGIVMLILIVILALAFLWYC). Residues 120-150 (LAYYFYMQQHMALYARHGQVPVYNWDAPGDW) lie on the Cytoplasmic side of the membrane.

It localises to the membrane. This is PTTG1IP family member 2 from Mus musculus (Mouse).